The chain runs to 460 residues: UDP-N-acetylmuramate--L-alanine ligase (460 aa).

112 to 118 (GTHGKTT) is an ATP binding site.

It belongs to the MurCDEF family.

It is found in the cytoplasm. It catalyses the reaction UDP-N-acetyl-alpha-D-muramate + L-alanine + ATP = UDP-N-acetyl-alpha-D-muramoyl-L-alanine + ADP + phosphate + H(+). The protein operates within cell wall biogenesis; peptidoglycan biosynthesis. Cell wall formation. The sequence is that of UDP-N-acetylmuramate--L-alanine ligase from Pelobacter propionicus (strain DSM 2379 / NBRC 103807 / OttBd1).